Reading from the N-terminus, the 1062-residue chain is Suppressor of mar1-1 protein (1062 aa).

The span at 1 to 17 shows a compositional bias: polar residues; it reads MSENTTAPSDNITNEQR. Disordered regions lie at residues 1-27, 188-217, 267-337, 370-398, 595-634, and 681-804; these read MSEN…DDVD, ENSS…ASTS, TKQE…KKRT, SSKF…SATQ, EIST…QQEG, and SGEE…GNLG. At S2 the chain carries N-acetylserine. Residues 189-205 show a composition bias toward low complexity; that stretch reads NSSNNTSSQHNTSSSRR. Polar residues-rich tracts occupy residues 267 to 279, 287 to 298, and 305 to 323; these read TKQE…APSS, SLTSVPQRTNNE, and STAN…NNLI. Residues 325–335 are compositionally biased toward basic residues; sequence IKRKRGRPPKK. Polar residues-rich tracts occupy residues 370–385 and 610–629; these read SSKF…NPVS and TKGS…GISD. A phosphoserine mark is found at S378, S379, S628, and S681. Residues 685–699 are compositionally biased toward basic and acidic residues; it reads AITKENAEYERKTPG. T697 is subject to Phosphothreonine. The segment covering 704 to 716 has biased composition (polar residues); the sequence is TTFVPLENSQPSD. At S712 the chain carries Phosphoserine; by ATM or ATR. S738 carries the phosphoserine modification. A compositionally biased stretch (polar residues) spans 781-793; it reads KGTSSIHNDTESA. Residue T817 is modified to Phosphothreonine.

Interacts with RFM1. This interaction is required to recruit HST1.

The protein resides in the nucleus. DNA-binding protein that specifically binds the regulatory region of middle sporulation genes (MSE). Required for the repression of middle sporulation genes during vegetative growth. Represses expression via the recruitment of histone deacetylase HST1. The polypeptide is Suppressor of mar1-1 protein (SUM1) (Saccharomyces cerevisiae (strain ATCC 204508 / S288c) (Baker's yeast)).